The sequence spans 295 residues: Nucleotide-binding protein PEPE_0450 (295 aa).

ATP is bound at residue 12–19; sequence GMSGAGKT. A GTP-binding site is contributed by 62-65; it reads DLRS.

This sequence belongs to the RapZ-like family.

Displays ATPase and GTPase activities. The protein is Nucleotide-binding protein PEPE_0450 of Pediococcus pentosaceus (strain ATCC 25745 / CCUG 21536 / LMG 10740 / 183-1w).